We begin with the raw amino-acid sequence, 693 residues long: Serine/threonine-protein kinase Pkn1 (693 aa).

Positions 59-328 constitute a Protein kinase domain; that stretch reads FRLVRRLGRG…QVALAEHVRV (270 aa). ATP-binding positions include 65–73 and K88; that span reads LGRGGMGAV. The active-site Proton acceptor is the D180. Residues 393 to 491 form the PilZ domain; sequence LVEVPVQVVL…LKAAVDALLQ (99 aa). Residues 630 to 663 form a TPR repeat; it reads ARSHFQSGGALERDGQLSQALDQYERGLKLAPLE.

This sequence belongs to the protein kinase superfamily. Ser/Thr protein kinase family. Autophosphorylated.

It carries out the reaction L-seryl-[protein] + ATP = O-phospho-L-seryl-[protein] + ADP + H(+). It catalyses the reaction L-threonyl-[protein] + ATP = O-phospho-L-threonyl-[protein] + ADP + H(+). May be regulated by calcium or a calmodulin-like protein. Its function is as follows. Plays an essential role in proper timing of early development events. The sequence is that of Serine/threonine-protein kinase Pkn1 (pkn1) from Myxococcus xanthus.